The chain runs to 205 residues: Large ribosomal subunit protein uL3 (205 aa).

Positions 126-150 (GGPKTHGQSDRHRAPGSIGSTTTPG) are disordered.

Belongs to the universal ribosomal protein uL3 family. In terms of assembly, part of the 50S ribosomal subunit. Forms a cluster with proteins L14 and L19.

Functionally, one of the primary rRNA binding proteins, it binds directly near the 3'-end of the 23S rRNA, where it nucleates assembly of the 50S subunit. This Dehalococcoides mccartyi (strain ATCC BAA-2100 / JCM 16839 / KCTC 5957 / BAV1) protein is Large ribosomal subunit protein uL3.